A 1176-amino-acid chain; its full sequence is Leucine--tRNA ligase, cytoplasmic (1176 aa).

The L-leucine site is built by Y52 and Y54. The short motif at 60 to 63 (HLGH) is the 'HIGH' region element. Residue S167 is modified to Phosphoserine. Residues 260-509 (GPQEYTLLKL…DAGDALIYME (250 aa)) are editing domain. L594 and S597 together coordinate L-leucine. A 'KMSKS' region motif is present at residues 716–720 (KMSKS). K719 provides a ligand contact to ATP. S720 bears the Phosphoserine mark. N6-acetyllysine occurs at positions 970 and 1047.

The protein belongs to the class-I aminoacyl-tRNA synthetase family. As to quaternary structure, part of the aminoacyl-tRNA synthetase multienzyme complex, also known as multisynthetase complex (MSC), that is composed of the aminoacyl-tRNA ligases for Arg (RARS1), Asp (DARS1), Gln (QARS1), Ile (IARS1), Leu (LARS1), Lys (KARS1), Met (MARS1) the bifunctional ligase for Glu and Pro (EPRS1) and the auxiliary subunits AIMP1/p43, AIMP2/p38 and EEF1E1/p18.

It is found in the cytoplasm. The enzyme catalyses tRNA(Leu) + L-leucine + ATP = L-leucyl-tRNA(Leu) + AMP + diphosphate. It carries out the reaction L-methionyl-tRNA(Leu) + H2O = tRNA(Leu) + L-methionine + H(+). With respect to regulation, 5-fluoro-1,3-dihydro-1-hydroxy-1,2-benzoxaborole inhibits LARS1 by forming a covalent adduct with the 3' adenosine of tRNA(Leu) at the editing site, thus locking the enzyme in an inactive conformation. In terms of biological role, aminoacyl-tRNA synthetase that catalyzes the specific attachment of leucine to its cognate tRNA (tRNA(Leu)). It performs tRNA aminoacylation in a two-step reaction: Leu is initially activated by ATP to form a leucyl-adenylate (Leu-AMP) intermediate; then the leucyl moiety is transferred to the acceptor 3' end of the tRNA to yield leucyl-tRNA. To improve the fidelity of catalytic reactions, it is also able to hydrolyze misactivated aminoacyl-adenylate intermediates (pre-transfer editing) and mischarged aminoacyl-tRNAs (post-transfer editing). The polypeptide is Leucine--tRNA ligase, cytoplasmic (Homo sapiens (Human)).